Reading from the N-terminus, the 590-residue chain is Bacillolysin (590 aa).

The first 24 residues, 1–24 (MKKVWFSLLGGAMLLGSVASGASA), serve as a signal peptide directing secretion. Positions 25–286 (ESSVSGPAQL…GSIVFQYDII (262 aa)) are cleaved as a propeptide — activation peptide. Residues D339, D341, and D419 each coordinate Ca(2+). Zn(2+) is bound at residue H423. Residue E424 is part of the active site. Residues H427 and E447 each contribute to the Zn(2+) site. 5 residues coordinate Ca(2+): D466, Y469, T470, I473, and D476. The Proton donor role is filled by H507.

Belongs to the peptidase M4 family. Ca(2+) serves as cofactor. Zn(2+) is required as a cofactor.

Its subcellular location is the secreted. It carries out the reaction Similar, but not identical, to that of thermolysin.. Involved in the generation of beta- and alpha-amylases from the large amylase precursor. In Paenibacillus polymyxa (Bacillus polymyxa), this protein is Bacillolysin (npr).